The sequence spans 398 residues: UPF0229 protein Ccel_0490 (398 aa).

2 disordered regions span residues 1–22 (MAIFRDCSNIGKDRSAEDRRRH) and 68–104 (KSKPGVGAGDGNEKRGDKFPGDSQEGKGKGNAGNSEG). Composition is skewed to basic and acidic residues over residues 11-22 (GKDRSAEDRRRH) and 78-95 (GNEKRGDKFPGDSQEGKG).

This sequence belongs to the UPF0229 family.

The chain is UPF0229 protein Ccel_0490 from Ruminiclostridium cellulolyticum (strain ATCC 35319 / DSM 5812 / JCM 6584 / H10) (Clostridium cellulolyticum).